We begin with the raw amino-acid sequence, 244 residues long: Phosphoadenosine 5'-phosphosulfate reductase (244 aa).

The active-site Nucleophile; cysteine thiosulfonate intermediate is C239.

It belongs to the PAPS reductase family. CysH subfamily.

The protein localises to the cytoplasm. It carries out the reaction [thioredoxin]-disulfide + sulfite + adenosine 3',5'-bisphosphate + 2 H(+) = [thioredoxin]-dithiol + 3'-phosphoadenylyl sulfate. Its pathway is sulfur metabolism; hydrogen sulfide biosynthesis; sulfite from sulfate: step 3/3. Its function is as follows. Catalyzes the formation of sulfite from phosphoadenosine 5'-phosphosulfate (PAPS) using thioredoxin as an electron donor. The sequence is that of Phosphoadenosine 5'-phosphosulfate reductase from Salmonella agona (strain SL483).